Here is a 281-residue protein sequence, read N- to C-terminus: Protein NipSnap homolog 2 (281 aa).

Residues 1 to 27 constitute a mitochondrion transit peptide; that stretch reads MAARVLLARGGLLRPAAQSAFLPGLRT.

Belongs to the NipSnap family. In terms of assembly, interacts with CALCOCO2/NDP52, NBR1, SQSTM1/p62, TAX1BP1 and WDFY3/ALFY. Interacts with ATG8 family proteins (MAP1LC3A, MAP1LC3B, MAP1LC3C, GABARAP, GABARAPL1 and GABARAPL2). Interacts with VDAC1.

It localises to the mitochondrion matrix. It is found in the cytoplasm. Protein involved in mitophagy by facilitating recruitment of the autophagy machinery required for clearance of damaged mitochondria. Accumulates on the mitochondria surface in response to mitochondrial depolarization and acts as a 'eat me' signal by recruiting proteins involved in selective autophagy, such as autophagy receptors (CALCOCO2/NDP52, NBR1, SQSTM1/p62, TAX1BP1 and WDFY3/ALFY) and ATG8 family proteins (MAP1LC3A, MAP1LC3B, MAP1LC3C, GABARAP, GABARAPL1 and GABARAPL2). May act as a positive regulator of L-type calcium channels. The chain is Protein NipSnap homolog 2 from Mus musculus (Mouse).